Consider the following 125-residue polypeptide: Prefoldin subunit beta (125 aa).

Belongs to the prefoldin subunit beta family. In terms of assembly, heterohexamer of two alpha and four beta subunits.

It localises to the cytoplasm. In terms of biological role, molecular chaperone capable of stabilizing a range of proteins. Seems to fulfill an ATP-independent, HSP70-like function in archaeal de novo protein folding. The polypeptide is Prefoldin subunit beta (pfdB) (Sulfurisphaera tokodaii (strain DSM 16993 / JCM 10545 / NBRC 100140 / 7) (Sulfolobus tokodaii)).